A 306-amino-acid chain; its full sequence is Zinc finger protein 625 (306 aa).

Residues 31-53 (PRVKSCGEVSVGHASLNRHHRAD) form a C2H2-type 1; degenerate zinc finger. 8 C2H2-type zinc fingers span residues 69–91 (YKCT…EWAH), 97–119 (YDCE…RIMH), 125–147 (YKCN…KRTH), 153–175 (YECK…ERTH), 181–203 (YECS…KITH), 209–231 (YECK…ERTH), 237–259 (YECK…GRTH), and 265–287 (YECK…ERTH). Y209 carries the post-translational modification Phosphotyrosine. The disordered stretch occupies residues 287 to 306 (HTGEKPCSSNTSKGQGEKIA).

This sequence belongs to the krueppel C2H2-type zinc-finger protein family.

It localises to the nucleus. In terms of biological role, may be involved in transcriptional regulation. The polypeptide is Zinc finger protein 625 (ZNF625) (Homo sapiens (Human)).